We begin with the raw amino-acid sequence, 212 residues long: RNA chaperone ProQ (212 aa).

Residues 107–153 (QDKAKAKRVAQAKSANPAAKTAKKPVKKPVAKRPKQTQSSKPAKEPV) are disordered. The span at 117 to 126 (QAKSANPAAK) shows a compositional bias: low complexity. Residues 127 to 141 (TAKKPVKKPVAKRPK) are compositionally biased toward basic residues.

It belongs to the ProQ family.

The protein localises to the cytoplasm. In terms of biological role, RNA chaperone with significant RNA binding, RNA strand exchange and RNA duplexing activities. This Shewanella halifaxensis (strain HAW-EB4) protein is RNA chaperone ProQ.